Consider the following 222-residue polypeptide: 23kDa protein (222 aa).

Residues 1-12 show a composition bias toward polar residues; sequence MEPHDQSGSTTR. Residues 1–21 form a disordered region; the sequence is MEPHDQSGSTTRQLDEIRDRR.

Its function is as follows. May act as a regulatory factor during viral transcription. In Indian citrus ringspot virus (isolate Kinnow mandarin/India/K1/1996) (ICRSV), this protein is 23kDa protein.